The following is a 295-amino-acid chain: Glycine--tRNA ligase alpha subunit (295 aa).

Belongs to the class-II aminoacyl-tRNA synthetase family. As to quaternary structure, tetramer of two alpha and two beta subunits.

It is found in the cytoplasm. The enzyme catalyses tRNA(Gly) + glycine + ATP = glycyl-tRNA(Gly) + AMP + diphosphate. The polypeptide is Glycine--tRNA ligase alpha subunit (Rhodospirillum rubrum (strain ATCC 11170 / ATH 1.1.1 / DSM 467 / LMG 4362 / NCIMB 8255 / S1)).